A 187-amino-acid polypeptide reads, in one-letter code: Threonylcarbamoyl-AMP synthase (187 aa).

The YrdC-like domain maps to 4 to 187 (TLDLDRAVAA…DARSGQILRD (184 aa)).

It belongs to the SUA5 family. TsaC subfamily.

It is found in the cytoplasm. It catalyses the reaction L-threonine + hydrogencarbonate + ATP = L-threonylcarbamoyladenylate + diphosphate + H2O. Required for the formation of a threonylcarbamoyl group on adenosine at position 37 (t(6)A37) in tRNAs that read codons beginning with adenine. Catalyzes the conversion of L-threonine, HCO(3)(-)/CO(2) and ATP to give threonylcarbamoyl-AMP (TC-AMP) as the acyladenylate intermediate, with the release of diphosphate. The protein is Threonylcarbamoyl-AMP synthase of Xanthomonas axonopodis pv. citri (strain 306).